We begin with the raw amino-acid sequence, 102 residues long: Small ribosomal subunit protein uS10 (102 aa).

This sequence belongs to the universal ribosomal protein uS10 family. In terms of assembly, part of the 30S ribosomal subunit.

Its function is as follows. Involved in the binding of tRNA to the ribosomes. The sequence is that of Small ribosomal subunit protein uS10 from Trichlorobacter lovleyi (strain ATCC BAA-1151 / DSM 17278 / SZ) (Geobacter lovleyi).